Here is a 316-residue protein sequence, read N- to C-terminus: Transaldolase (316 aa).

K132 serves as the catalytic Schiff-base intermediate with substrate.

It belongs to the transaldolase family. Type 1 subfamily.

It localises to the cytoplasm. The enzyme catalyses D-sedoheptulose 7-phosphate + D-glyceraldehyde 3-phosphate = D-erythrose 4-phosphate + beta-D-fructose 6-phosphate. It participates in carbohydrate degradation; pentose phosphate pathway; D-glyceraldehyde 3-phosphate and beta-D-fructose 6-phosphate from D-ribose 5-phosphate and D-xylulose 5-phosphate (non-oxidative stage): step 2/3. Functionally, transaldolase is important for the balance of metabolites in the pentose-phosphate pathway. The protein is Transaldolase of Methylomonas aminofaciens.